Reading from the N-terminus, the 409-residue chain is Pectin acetylesterase 4 (409 aa).

Residues 1 to 32 (MVIRSLLQCRTWSKSDWLLASIGIVLIVYSFS) form the signal peptide. N-linked (GlcNAc...) asparagine glycosylation is found at N36 and N163. Catalysis depends on charge relay system residues S199, D295, and H362. N-linked (GlcNAc...) asparagine glycosylation is found at N379 and N406.

Belongs to the pectinacetylesterase family.

The protein localises to the secreted. It is found in the cell wall. Its function is as follows. Hydrolyzes acetyl esters in homogalacturonan regions of pectin. In type I primary cell wall, galacturonic acid residues of pectin can be acetylated at the O-2 and O-3 positions. Decreasing the degree of acetylation of pectin gels in vitro alters their physical properties. This Arabidopsis thaliana (Mouse-ear cress) protein is Pectin acetylesterase 4.